The sequence spans 155 residues: Transcriptional repressor NrdR (155 aa).

The segment at 3-34 (CPFCHAEETKVVDSRLVADGAQVRRRRECLEC) is a zinc-finger region. The region spanning 49–139 (PLIIKRDGRR…VYKRFKDVSD (91 aa)) is the ATP-cone domain.

The protein belongs to the NrdR family. It depends on Zn(2+) as a cofactor.

Functionally, negatively regulates transcription of bacterial ribonucleotide reductase nrd genes and operons by binding to NrdR-boxes. This chain is Transcriptional repressor NrdR, found in Legionella pneumophila (strain Paris).